The sequence spans 195 residues: Endoribonuclease YbeY (195 aa).

Zn(2+) is bound by residues His152, His156, and His162.

This sequence belongs to the endoribonuclease YbeY family. The cofactor is Zn(2+).

It is found in the cytoplasm. Its function is as follows. Single strand-specific metallo-endoribonuclease involved in late-stage 70S ribosome quality control and in maturation of the 3' terminus of the 16S rRNA. This is Endoribonuclease YbeY from Rhodopseudomonas palustris (strain BisB5).